Here is a 553-residue protein sequence, read N- to C-terminus: Solute carrier family 22 member 2 (553 aa).

Topologically, residues 1 to 21 (MPTVDDILEHIGEFHLFQKQT) are cytoplasmic. Residues 22–42 (FFLLALLSGAFTPIYVGIVFL) form a helical membrane-spanning segment. Over 43–150 (GFTPNHHCRS…LVCAHSWMLD (108 aa)) the chain is Extracellular. N-linked (GlcNAc...) asparagine glycosylation occurs at Asn71. Residues 151-171 (LFQSLVNVGFFIGAVGIGYLA) traverse the membrane as a helical segment. Residues 172 to 177 (DRFGRK) lie on the Cytoplasmic side of the membrane. The helical transmembrane segment at 178–198 (FCLLVTILINAISGVLMAISP) threads the bilayer. The Extracellular portion of the chain corresponds to 199-210 (NYAWMLVFRFLQ). A helical membrane pass occupies residues 211–231 (GLVSKAGWLIGYILITEFVGL). Topologically, residues 232 to 238 (GYRRTVG) are cytoplasmic. A helical transmembrane segment spans residues 239 to 259 (ICYQIAFTVGLLILAGVAYAL). Over 260 to 263 (PNWR) the chain is Extracellular. The helical transmembrane segment at 264–284 (WLQFAVTLPNFCFLLYFWCIP) threads the bilayer. The Proline-rich sequence signature appears at 284-288 (PESPR). Topologically, residues 285–348 (ESPRWLISQN…VRTPQIRKHT (64 aa)) are cytoplasmic. Residues 349–369 (LILMYNWFTSSVLYQGLIMHM) traverse the membrane as a helical segment. At 370-375 (GLAGDN) the chain is on the extracellular side. A helical membrane pass occupies residues 376–396 (IYLDFFYSALVEFPAAFIIIL). Over 397 to 404 (TIDRIGRR) the chain is Cytoplasmic. Residues 405–425 (YPWAVSNMVAGAACLASVFIP) traverse the membrane as a helical segment. Residues 426-432 (DDLQWLK) lie on the Extracellular side of the membrane. A helical membrane pass occupies residues 433-453 (ITVACLGRMGITIAYEMVCLV). The Cytoplasmic portion of the chain corresponds to 454 to 464 (NAELYPTYIRN). Residues 465–485 (LAVLVCSSMCDIGGIVTPFLV) traverse the membrane as a helical segment. The Extracellular portion of the chain corresponds to 486-494 (YRLTDIWLE). A helical membrane pass occupies residues 495-515 (FPLVVFAVVGLVAGGLVLLLP). Over 516–553 (ETKGKALPETIEDAEKMQRPRKKKEKRIYLQVKKAELS) the chain is Cytoplasmic.

Belongs to the major facilitator (TC 2.A.1) superfamily. Organic cation transporter (TC 2.A.1.19) family. Post-translationally, tyrosine phosphorylated by tyrosine-protein kinase YES1. Expressed in kidney and ureter. To a lower extent, also expressed in brain and embryo.

Its subcellular location is the basolateral cell membrane. It is found in the basal cell membrane. The protein localises to the apical cell membrane. It catalyses the reaction (R)-noradrenaline(out) = (R)-noradrenaline(in). It carries out the reaction (R)-adrenaline(out) = (R)-adrenaline(in). The catalysed reaction is serotonin(out) = serotonin(in). The enzyme catalyses dopamine(out) = dopamine(in). It catalyses the reaction histamine(out) = histamine(in). It carries out the reaction thiamine(in) = thiamine(out). The catalysed reaction is creatinine(in) = creatinine(out). The enzyme catalyses 1-methylnicotinamide(out) = 1-methylnicotinamide(in). It catalyses the reaction guanidine(out) = guanidine(in). It carries out the reaction choline(out) = choline(in). The catalysed reaction is agmatine(out) = agmatine(in). The enzyme catalyses putrescine(out) = putrescine(in). It catalyses the reaction spermidine(in) = spermidine(out). It carries out the reaction tyramine(in) = tyramine(out). The catalysed reaction is L-histidyl-L-proline diketopiperazine(in) = L-histidyl-L-proline diketopiperazine(out). The enzyme catalyses (R)-salsolinol(in) = (R)-salsolinol(out). It catalyses the reaction N-methyl-(R)-salsolinol(in) = N-methyl-(R)-salsolinol(out). It carries out the reaction acetylcholine(in) = acetylcholine(out). The catalysed reaction is prostaglandin F2alpha(out) = prostaglandin F2alpha(in). The enzyme catalyses prostaglandin E2(out) = prostaglandin E2(in). Its activity is regulated as follows. Tyrosine phosphorylation of the transporter leads to activation of the transport activity. TEA uptake is activated by tyrosine phosphorylation. Inhibited by cGMP, most likely through a cGMP-binding protein that interacts with OCT2. Electrogenic voltage-dependent transporter that mediates the transport of a variety of organic cations such as endogenous bioactive amines, cationic drugs and xenobiotics. Functions as a Na(+)-independent, bidirectional uniporter. Cation cellular uptake or release is driven by the electrochemical potential, i.e. membrane potential and concentration gradient. However, may also engage electroneutral cation exchange when saturating concentrations of cation substrates are reached. Predominantly expressed at the basolateral membrane of hepatocytes and proximal tubules and involved in the uptake and disposition of cationic compounds by hepatic and renal clearance from the blood flow. Implicated in monoamine neurotransmitters uptake such as histamine, dopamine, adrenaline/epinephrine, noradrenaline/norepinephrine, serotonin and tyramine, thereby supporting a physiological role in the central nervous system by regulating interstitial concentrations of neurotransmitters. Also capable of transporting dopaminergic neuromodulators cyclo(his-pro), salsolinol and N-methyl-salsolinol, thereby involved in the maintenance of dopaminergic cell integrity in the central nervous system. Mediates the bidirectional transport of acetylcholine (ACh) at the apical membrane of ciliated cell in airway epithelium, thereby playing a role in luminal release of ACh from bronchial epithelium. Also transports guanidine and endogenous monoamines such as vitamin B1/thiamine, creatinine and N-1-methylnicotinamide (NMN). Mediates the uptake and efflux of quaternary ammonium compound choline. Mediates the bidirectional transport of polyamine agmatine and the uptake of polyamines putrescine and spermidine. Able to transport non-amine endogenous compounds such as prostaglandin E2 (PGE2) and prostaglandin F2-alpha (PGF2-alpha). Also involved in the uptake of xenobiotic 4-(4-(dimethylamino)styryl)-N-methylpyridinium (ASP). May contribute to regulate the transport of organic compounds in testis across the blood-testis-barrier. This Mus musculus (Mouse) protein is Solute carrier family 22 member 2.